The primary structure comprises 257 residues: tRNA pseudouridine synthase A (257 aa).

The Nucleophile role is filled by D53. Position 111 (Y111) interacts with substrate.

This sequence belongs to the tRNA pseudouridine synthase TruA family. In terms of assembly, homodimer.

It carries out the reaction uridine(38/39/40) in tRNA = pseudouridine(38/39/40) in tRNA. Functionally, formation of pseudouridine at positions 38, 39 and 40 in the anticodon stem and loop of transfer RNAs. The protein is tRNA pseudouridine synthase A of Xanthomonas campestris pv. campestris (strain 8004).